Here is a 265-residue protein sequence, read N- to C-terminus: Phosphate import ATP-binding protein PstB 2 (265 aa).

The ABC transporter domain maps to 13-260 (FRTENLNVYY…PTKQATRDYV (248 aa)). 45 to 52 (GPSGCGKS) serves as a coordination point for ATP.

This sequence belongs to the ABC transporter superfamily. Phosphate importer (TC 3.A.1.7) family. In terms of assembly, the complex is composed of two ATP-binding proteins (PstB), two transmembrane proteins (PstC and PstA) and a solute-binding protein (PstS).

The protein localises to the cell inner membrane. It catalyses the reaction phosphate(out) + ATP + H2O = ADP + 2 phosphate(in) + H(+). Functionally, part of the ABC transporter complex PstSACB involved in phosphate import. Responsible for energy coupling to the transport system. The sequence is that of Phosphate import ATP-binding protein PstB 2 from Synechococcus sp. (strain JA-2-3B'a(2-13)) (Cyanobacteria bacterium Yellowstone B-Prime).